The chain runs to 448 residues: Phosphoglucosamine mutase (448 aa).

Ser-104 (phosphoserine intermediate) is an active-site residue. Residues Ser-104, Asp-243, Asp-245, and Asp-247 each contribute to the Mg(2+) site. Ser-104 is subject to Phosphoserine.

Belongs to the phosphohexose mutase family. Requires Mg(2+) as cofactor. Activated by phosphorylation.

The enzyme catalyses alpha-D-glucosamine 1-phosphate = D-glucosamine 6-phosphate. Functionally, catalyzes the conversion of glucosamine-6-phosphate to glucosamine-1-phosphate. This Xylella fastidiosa (strain 9a5c) protein is Phosphoglucosamine mutase.